The following is a 214-amino-acid chain: A-type ATP synthase subunit D (214 aa).

The protein belongs to the V-ATPase D subunit family. In terms of assembly, has multiple subunits with at least A(3), B(3), C, D, E, F, H, I and proteolipid K(x).

The protein resides in the cell membrane. In terms of biological role, component of the A-type ATP synthase that produces ATP from ADP in the presence of a proton gradient across the membrane. The chain is A-type ATP synthase subunit D from Pyrococcus horikoshii (strain ATCC 700860 / DSM 12428 / JCM 9974 / NBRC 100139 / OT-3).